Here is a 446-residue protein sequence, read N- to C-terminus: D-inositol 3-phosphate glycosyltransferase (446 aa).

The tract at residues 1–21 (MSHYVGRLGRRSPAGSGRLRL) is disordered. His34 is a binding site for 1D-myo-inositol 3-phosphate. UDP-N-acetyl-alpha-D-glucosamine contacts are provided by residues 40 to 41 (QP) and Gly48. 1D-myo-inositol 3-phosphate is bound by residues 45–50 (DAGGMN), Lys103, Tyr136, Thr160, and Arg180. UDP-N-acetyl-alpha-D-glucosamine contacts are provided by Arg255, Lys260, and Val321. Positions 330, 331, and 333 each coordinate Mg(2+). UDP-N-acetyl-alpha-D-glucosamine is bound by residues Glu343 and Glu351. Position 357 (Thr357) interacts with Mg(2+).

It belongs to the glycosyltransferase group 1 family. MshA subfamily. In terms of assembly, homodimer.

It carries out the reaction 1D-myo-inositol 3-phosphate + UDP-N-acetyl-alpha-D-glucosamine = 1D-myo-inositol 2-acetamido-2-deoxy-alpha-D-glucopyranoside 3-phosphate + UDP + H(+). Functionally, catalyzes the transfer of a N-acetyl-glucosamine moiety to 1D-myo-inositol 3-phosphate to produce 1D-myo-inositol 2-acetamido-2-deoxy-glucopyranoside 3-phosphate in the mycothiol biosynthesis pathway. This Streptomyces scabiei (strain 87.22) protein is D-inositol 3-phosphate glycosyltransferase.